The following is a 623-amino-acid chain: Xaa-Pro aminopeptidase 1 (623 aa).

A peptide is bound at residue Arg-77. Lys-304 carries the N6-acetyllysine modification. His-395 provides a ligand contact to a peptide. 3 residues coordinate Mn(2+): Asp-415, Asp-426, and His-489. Positions 489, 498, and 523 each coordinate a peptide. The Mn(2+) site is built by Glu-523 and Glu-537.

Belongs to the peptidase M24B family. In terms of assembly, homodimer. It depends on Mn(2+) as a cofactor.

The protein resides in the cytoplasm. It is found in the cytosol. It carries out the reaction Release of any N-terminal amino acid, including proline, that is linked to proline, even from a dipeptide or tripeptide.. In terms of biological role, metalloaminopeptidase that catalyzes the removal of a penultimate prolyl residue from the N-termini of peptides, such as Arg-Pro-Pro. Contributes to the degradation of bradykinin. The protein is Xaa-Pro aminopeptidase 1 of Mus musculus (Mouse).